Here is a 270-residue protein sequence, read N- to C-terminus: B3 domain-containing protein Os03g0212300 (270 aa).

2 consecutive DNA-binding regions (TF-B3) follow at residues 13–110 and 158–265; these read FEFF…FDET and VTLR…RKAD.

The protein localises to the nucleus. This Oryza sativa subsp. japonica (Rice) protein is B3 domain-containing protein Os03g0212300.